The primary structure comprises 131 residues: Large ribosomal subunit protein bL17 (131 aa).

The protein belongs to the bacterial ribosomal protein bL17 family. As to quaternary structure, part of the 50S ribosomal subunit. Contacts protein L32.

This is Large ribosomal subunit protein bL17 from Oenococcus oeni (strain ATCC BAA-331 / PSU-1).